The chain runs to 192 residues: Ion-translocating oxidoreductase complex subunit A (192 aa).

The next 6 membrane-spanning stretches (helical) occupy residues 5–25, 38–58, 72–92, 102–122, 134–154, and 171–191; these read LLLL…FLGL, AIGM…LSFL, LRTM…EMLV, ALGI…VALL, AIYG…FSAM, and AIAM…AGLI.

It belongs to the NqrDE/RnfAE family. In terms of assembly, the complex is composed of six subunits: RnfA, RnfB, RnfC, RnfD, RnfE and RnfG.

The protein localises to the cell inner membrane. Part of a membrane-bound complex that couples electron transfer with translocation of ions across the membrane. This chain is Ion-translocating oxidoreductase complex subunit A, found in Shewanella denitrificans (strain OS217 / ATCC BAA-1090 / DSM 15013).